Consider the following 87-residue polypeptide: UPF0250 protein Ent638_1166 (87 aa).

It belongs to the UPF0250 family.

This Enterobacter sp. (strain 638) protein is UPF0250 protein Ent638_1166.